Consider the following 336-residue polypeptide: Glyceraldehyde-3-phosphate dehydrogenase 1 (336 aa).

Residues 12 to 13 (RI), Asp-34, and Ser-120 contribute to the NAD(+) site. Residues 150 to 152 (SCT), Thr-181, Arg-198, 211 to 212 (TG), and Arg-234 each bind D-glyceraldehyde 3-phosphate. The active-site Nucleophile is Cys-151. Asn-316 is an NAD(+) binding site.

Belongs to the glyceraldehyde-3-phosphate dehydrogenase family. In terms of assembly, homotetramer.

It localises to the cytoplasm. It carries out the reaction D-glyceraldehyde 3-phosphate + phosphate + NAD(+) = (2R)-3-phospho-glyceroyl phosphate + NADH + H(+). Its pathway is carbohydrate degradation; glycolysis; pyruvate from D-glyceraldehyde 3-phosphate: step 1/5. Its function is as follows. Catalyzes the oxidative phosphorylation of glyceraldehyde 3-phosphate (G3P) to 1,3-bisphosphoglycerate (BPG) using the cofactor NAD. The first reaction step involves the formation of a hemiacetal intermediate between G3P and a cysteine residue, and this hemiacetal intermediate is then oxidized to a thioester, with concomitant reduction of NAD to NADH. The reduced NADH is then exchanged with the second NAD, and the thioester is attacked by a nucleophilic inorganic phosphate to produce BPG. The chain is Glyceraldehyde-3-phosphate dehydrogenase 1 (gapA1) from Staphylococcus epidermidis (strain ATCC 35984 / DSM 28319 / BCRC 17069 / CCUG 31568 / BM 3577 / RP62A).